The primary structure comprises 209 residues: Ribosome maturation factor RimM (209 aa).

A disordered region spans residues 1-28 (MARRPQRPAPSGRAGAGRGAAGAAPPGP). Residues 123 to 197 (EDEFFTADLV…RVTIAPPEDL (75 aa)) enclose the PRC barrel domain.

The protein belongs to the RimM family. In terms of assembly, binds ribosomal protein uS19.

It is found in the cytoplasm. Its function is as follows. An accessory protein needed during the final step in the assembly of 30S ribosomal subunit, possibly for assembly of the head region. Essential for efficient processing of 16S rRNA. May be needed both before and after RbfA during the maturation of 16S rRNA. It has affinity for free ribosomal 30S subunits but not for 70S ribosomes. The polypeptide is Ribosome maturation factor RimM (Methylobacterium sp. (strain 4-46)).